Consider the following 980-residue polypeptide: Hypoxia up-regulated protein 1 (980 aa).

The N-terminal stretch at 1–24 (MREKLSLWAIFCLVVAFLPSQTES) is a signal peptide. 2 disordered regions span residues 558 to 682 (EEES…DIAV) and 894 to 980 (KPKP…EDEL). Basic and acidic residues-rich tracts occupy residues 599–656 (AGKE…PEEK) and 896–906 (KPKDKAKDKNS). The span at 907–916 (TSESSKANST) shows a compositional bias: polar residues. Composition is skewed to basic and acidic residues over residues 918 to 949 (DAEK…KAEE) and 960 to 980 (TDDK…EDEL). The short motif at 977 to 980 (EDEL) is the Prevents secretion from ER element.

This sequence belongs to the heat shock protein 70 family.

Its subcellular location is the endoplasmic reticulum lumen. In terms of biological role, has a pivotal role in cytoprotective cellular mechanisms triggered by oxygen deprivation. May play a role as a molecular chaperone and participate in protein folding. The chain is Hypoxia up-regulated protein 1 (hyou1) from Danio rerio (Zebrafish).